The chain runs to 454 residues: Glutamate--tRNA ligase (454 aa).

Residues 7–17 (PSPTGCLHIGG) carry the 'HIGH' region motif. Zn(2+)-binding residues include cysteine 96, cysteine 98, cysteine 123, and aspartate 125. The short motif at 230–234 (RLSKR) is the 'KMSKS' region element. Lysine 233 serves as a coordination point for ATP.

It belongs to the class-I aminoacyl-tRNA synthetase family. Glutamate--tRNA ligase type 1 subfamily. Monomer. The cofactor is Zn(2+).

It localises to the cytoplasm. It carries out the reaction tRNA(Glu) + L-glutamate + ATP = L-glutamyl-tRNA(Glu) + AMP + diphosphate. In terms of biological role, catalyzes the attachment of glutamate to tRNA(Glu) in a two-step reaction: glutamate is first activated by ATP to form Glu-AMP and then transferred to the acceptor end of tRNA(Glu). The sequence is that of Glutamate--tRNA ligase from Ruthia magnifica subsp. Calyptogena magnifica.